A 207-amino-acid polypeptide reads, in one-letter code: Ribosomal RNA small subunit methyltransferase G (207 aa).

S-adenosyl-L-methionine contacts are provided by residues glycine 75, leucine 80, 126–127 (VE), and arginine 141.

The protein belongs to the methyltransferase superfamily. RNA methyltransferase RsmG family.

Its subcellular location is the cytoplasm. It catalyses the reaction guanosine(527) in 16S rRNA + S-adenosyl-L-methionine = N(7)-methylguanosine(527) in 16S rRNA + S-adenosyl-L-homocysteine. Functionally, specifically methylates the N7 position of guanine in position 527 of 16S rRNA. This chain is Ribosomal RNA small subunit methyltransferase G, found in Psychromonas ingrahamii (strain DSM 17664 / CCUG 51855 / 37).